Consider the following 269-residue polypeptide: Probable molybdenum ABC transporter permease protein HVO_B0370 (269 aa).

6 consecutive transmembrane segments (helical) span residues 26 to 46 (LLLA…LVFA), 69 to 89 (VVAA…LAYW), 100 to 120 (VILA…GMLL), 140 to 160 (SLFG…VVTA), 198 to 218 (ILAG…ATLM), and 243 to 263 (FPVA…VHAL). In terms of domain architecture, ABC transmembrane type-1 spans 65–258 (ATNSVVAATL…LVGIAVGAIL (194 aa)).

It belongs to the binding-protein-dependent transport system permease family. As to quaternary structure, the complex is composed of two ATP-binding proteins, two transmembrane proteins (HVO_B0370) and a solute-binding protein (HVO_B0369).

The protein resides in the cell membrane. Functionally, part of an ABC transporter complex involved in molybdenum import. Responsible for the translocation of the substrate across the membrane. This Haloferax volcanii (strain ATCC 29605 / DSM 3757 / JCM 8879 / NBRC 14742 / NCIMB 2012 / VKM B-1768 / DS2) (Halobacterium volcanii) protein is Probable molybdenum ABC transporter permease protein HVO_B0370.